Here is an 873-residue protein sequence, read N- to C-terminus: E3 ubiquitin-protein ligase UPL5 (873 aa).

A compositionally biased stretch (polar residues) spans 1-19 (MTLSRSSADDSTNNANRSY). Disordered regions lie at residues 1–37 (MTLSRSSADDSTNNANRSYSAVAGTDNKRKRDEDSSD) and 70–90 (RSGENSRSLSSSGECSSSNRP). The Ubiquitin-like domain occupies 95–171 (LQIFVRMMSG…LQLVARMQST (77 aa)). Residues 272–296 (CLPIVLEFCKLLRKVCPDQKLYVTC) form the C-type lectin domain. Residues 532–873 (SPEALHGGLF…DHVSSSFGKW (342 aa)) form the HECT domain. C839 functions as the Glycyl thioester intermediate in the catalytic mechanism.

It belongs to the UPL family. In terms of assembly, interacts with WRKY53.

The protein localises to the cytoplasm. The catalysed reaction is S-ubiquitinyl-[E2 ubiquitin-conjugating enzyme]-L-cysteine + [acceptor protein]-L-lysine = [E2 ubiquitin-conjugating enzyme]-L-cysteine + N(6)-ubiquitinyl-[acceptor protein]-L-lysine.. The protein operates within protein modification; protein ubiquitination. Its function is as follows. E3 ubiquitin protein ligase that regulates leaf senescence through ubiquitination and subsequent degradation of WRKY53. The sequence is that of E3 ubiquitin-protein ligase UPL5 (UPL5) from Arabidopsis thaliana (Mouse-ear cress).